The chain runs to 220 residues: 1-Cys peroxiredoxin B (220 aa).

Positions 4–165 (LTLGDVVPDL…VLRATDALLT (162 aa)) constitute a Thioredoxin domain. The active-site Cysteine sulfenic acid (-SOH) intermediate is Cys46. A Bipartite nuclear localization signal motif is present at residues 195 to 218 (KARFPAGFETAQLPSNKCYLRFTQ).

The protein belongs to the peroxiredoxin family. Prx6 subfamily.

The protein resides in the nucleus. Its subcellular location is the cytoplasm. The enzyme catalyses a hydroperoxide + [thioredoxin]-dithiol = an alcohol + [thioredoxin]-disulfide + H2O. Thiol-specific peroxidase that catalyzes the reduction of hydrogen peroxide and organic hydroperoxides to water and alcohols, respectively. Seems to contribute to the inhibition of germination during stress. The polypeptide is 1-Cys peroxiredoxin B (Oryza sativa subsp. indica (Rice)).